The primary structure comprises 542 residues: Chaperonin GroEL (542 aa).

ATP is bound by residues 29–32 (TLGP), 86–90 (DGTTT), G413, 476–478 (NAA), and D492. Residues 522–542 (PDENGPAAVPDMGMGGMGGMM) are disordered.

This sequence belongs to the chaperonin (HSP60) family. Forms a cylinder of 14 subunits composed of two heptameric rings stacked back-to-back. Interacts with the co-chaperonin GroES.

The protein localises to the cytoplasm. The catalysed reaction is ATP + H2O + a folded polypeptide = ADP + phosphate + an unfolded polypeptide.. Together with its co-chaperonin GroES, plays an essential role in assisting protein folding. The GroEL-GroES system forms a nano-cage that allows encapsulation of the non-native substrate proteins and provides a physical environment optimized to promote and accelerate protein folding. The protein is Chaperonin GroEL of Listeria monocytogenes serotype 4a (strain HCC23).